The sequence spans 333 residues: Glycerol-3-phosphate dehydrogenase [NAD(P)+] (333 aa).

Tyr14, His34, and Lys108 together coordinate NADPH. Sn-glycerol 3-phosphate contacts are provided by Lys108, Gly137, and Thr139. Position 141 (Ala141) interacts with NADPH. 5 residues coordinate sn-glycerol 3-phosphate: Lys193, Asp247, Ser257, Arg258, and Asn259. Lys193 acts as the Proton acceptor in catalysis. Position 258 (Arg258) interacts with NADPH. NADPH-binding residues include Leu282 and Glu284.

Belongs to the NAD-dependent glycerol-3-phosphate dehydrogenase family.

It localises to the cytoplasm. It carries out the reaction sn-glycerol 3-phosphate + NAD(+) = dihydroxyacetone phosphate + NADH + H(+). The enzyme catalyses sn-glycerol 3-phosphate + NADP(+) = dihydroxyacetone phosphate + NADPH + H(+). It participates in membrane lipid metabolism; glycerophospholipid metabolism. Catalyzes the reduction of the glycolytic intermediate dihydroxyacetone phosphate (DHAP) to sn-glycerol 3-phosphate (G3P), the key precursor for phospholipid synthesis. In Blochmanniella floridana, this protein is Glycerol-3-phosphate dehydrogenase [NAD(P)+].